Reading from the N-terminus, the 165-residue chain is MSLPDKAFPVSWDQFHRDARALAWRLAGLDKEFRAIVCITRGGLVPAAIISRELNIRMIDTVCIATRHDYVNQGDTVLLKGVAPELTTDAGEGVLVVDDLTDTGKTALEVREMLPRAHFACVYAKPKGVPTIDTFVTEVSQDTWIYFPWDMGFTYQEPIAKGSRG.

Residues arginine 41–glycine 42 and aspartate 98–threonine 106 contribute to the 5-phospho-alpha-D-ribose 1-diphosphate site. Aspartate 99 serves as a coordination point for Mg(2+). The guanine site is built by aspartate 102 and isoleucine 145. 2 residues coordinate xanthine: aspartate 102 and isoleucine 145. Residues aspartate 102–threonine 106 and tryptophan 144–isoleucine 145 each bind GMP.

The protein belongs to the purine/pyrimidine phosphoribosyltransferase family. XGPT subfamily. As to quaternary structure, homotetramer. Mg(2+) serves as cofactor.

Its subcellular location is the cell inner membrane. It catalyses the reaction GMP + diphosphate = guanine + 5-phospho-alpha-D-ribose 1-diphosphate. It carries out the reaction XMP + diphosphate = xanthine + 5-phospho-alpha-D-ribose 1-diphosphate. The catalysed reaction is IMP + diphosphate = hypoxanthine + 5-phospho-alpha-D-ribose 1-diphosphate. It functions in the pathway purine metabolism; GMP biosynthesis via salvage pathway; GMP from guanine: step 1/1. It participates in purine metabolism; XMP biosynthesis via salvage pathway; XMP from xanthine: step 1/1. Functionally, purine salvage pathway enzyme that catalyzes the transfer of the ribosyl-5-phosphate group from 5-phospho-alpha-D-ribose 1-diphosphate (PRPP) to the N9 position of the 6-oxopurines guanine and xanthine to form the corresponding ribonucleotides GMP (guanosine 5'-monophosphate) and XMP (xanthosine 5'-monophosphate), with the release of PPi. To a lesser extent, also acts on hypoxanthine. The protein is Xanthine-guanine phosphoribosyltransferase of Agrobacterium fabrum (strain C58 / ATCC 33970) (Agrobacterium tumefaciens (strain C58)).